The chain runs to 380 residues: Phospho-N-acetylmuramoyl-pentapeptide-transferase (380 aa).

Transmembrane regions (helical) follow at residues 26 to 46 (IVAA…IFIE), 75 to 95 (MGGA…ADLA), 98 to 118 (FVWA…TDDW), 135 to 155 (LVLQ…DWRF), 161 to 181 (FPWV…FVPS), 183 to 203 (LFNP…VIAT), 222 to 242 (VVSA…IAGF), 259 to 279 (LGVF…YNTY), 283 to 303 (VFMG…MAVL), 311 to 331 (AILH…VWSF), and 357 to 377 (KIIV…LLSI).

The protein belongs to the glycosyltransferase 4 family. MraY subfamily. Requires Mg(2+) as cofactor.

The protein localises to the cell inner membrane. The catalysed reaction is UDP-N-acetyl-alpha-D-muramoyl-L-alanyl-gamma-D-glutamyl-meso-2,6-diaminopimeloyl-D-alanyl-D-alanine + di-trans,octa-cis-undecaprenyl phosphate = di-trans,octa-cis-undecaprenyl diphospho-N-acetyl-alpha-D-muramoyl-L-alanyl-D-glutamyl-meso-2,6-diaminopimeloyl-D-alanyl-D-alanine + UMP. It functions in the pathway cell wall biogenesis; peptidoglycan biosynthesis. Catalyzes the initial step of the lipid cycle reactions in the biosynthesis of the cell wall peptidoglycan: transfers peptidoglycan precursor phospho-MurNAc-pentapeptide from UDP-MurNAc-pentapeptide onto the lipid carrier undecaprenyl phosphate, yielding undecaprenyl-pyrophosphoryl-MurNAc-pentapeptide, known as lipid I. This chain is Phospho-N-acetylmuramoyl-pentapeptide-transferase, found in Anaeromyxobacter dehalogenans (strain 2CP-1 / ATCC BAA-258).